We begin with the raw amino-acid sequence, 247 residues long: uncharacterized protein (247 aa).

Transmembrane regions (helical) follow at residues 19–39 (IFFTFLLCFIICTIYSESIMF), 73–93 (FFTSIYCTFPYFFYQFWAFFI), 106–126 (FLSFFFFTLLFFSCIIIYFII), 155–175 (YIQFTFQIFSYFFVLFQCPLF), 196–216 (YIYFLFLILAAFLSPPDILSQ), and 217–237 (FFLFSLIVFMYELCVFYSCFY).

This sequence belongs to the TatC family.

Its subcellular location is the mitochondrion membrane. This is an uncharacterized protein from Nephroselmis olivacea (Green alga).